Reading from the N-terminus, the 154-residue chain is Basic phospholipase A2 PC20 (154 aa).

Positions methionine 1–alanine 21 are cleaved as a signal peptide. Positions isoleucine 22–leucine 27 are excised as a propeptide. Intrachain disulfides connect cysteine 38/cysteine 98, cysteine 54/cysteine 143, cysteine 56/cysteine 72, cysteine 71/cysteine 125, cysteine 78/cysteine 118, cysteine 87/cysteine 111, and cysteine 105/cysteine 116. Ca(2+) contacts are provided by tyrosine 55, serine 57, and glycine 59. Residue histidine 75 is part of the active site. A Ca(2+)-binding site is contributed by aspartate 76. The active site involves aspartate 119.

The protein belongs to the phospholipase A2 family. Group I subfamily. D49 sub-subfamily. Ca(2+) serves as cofactor. Expressed by the venom gland.

The protein localises to the secreted. It carries out the reaction a 1,2-diacyl-sn-glycero-3-phosphocholine + H2O = a 1-acyl-sn-glycero-3-phosphocholine + a fatty acid + H(+). Snake venom phospholipase A2 (PLA2) that inhibits neuromuscular transmission by blocking acetylcholine release from the nerve termini. PLA2 catalyzes the calcium-dependent hydrolysis of the 2-acyl groups in 3-sn-phosphoglycerides. The polypeptide is Basic phospholipase A2 PC20 (Laticauda colubrina (Yellow-lipped sea krait)).